Reading from the N-terminus, the 86-residue chain is Putative membrane protein insertion efficiency factor (86 aa).

The disordered stretch occupies residues 66–86 (PLHEGGDDPVPPRKNDDNREN).

This sequence belongs to the UPF0161 family.

It is found in the cell inner membrane. Functionally, could be involved in insertion of integral membrane proteins into the membrane. The polypeptide is Putative membrane protein insertion efficiency factor (Proteus mirabilis (strain HI4320)).